Here is a 425-residue protein sequence, read N- to C-terminus: Gamma-glutamyl phosphate reductase (425 aa).

The protein belongs to the gamma-glutamyl phosphate reductase family.

It is found in the cytoplasm. It carries out the reaction L-glutamate 5-semialdehyde + phosphate + NADP(+) = L-glutamyl 5-phosphate + NADPH + H(+). Its pathway is amino-acid biosynthesis; L-proline biosynthesis; L-glutamate 5-semialdehyde from L-glutamate: step 2/2. In terms of biological role, catalyzes the NADPH-dependent reduction of L-glutamate 5-phosphate into L-glutamate 5-semialdehyde and phosphate. The product spontaneously undergoes cyclization to form 1-pyrroline-5-carboxylate. The chain is Gamma-glutamyl phosphate reductase from Aromatoleum aromaticum (strain DSM 19018 / LMG 30748 / EbN1) (Azoarcus sp. (strain EbN1)).